The sequence spans 374 residues: Hydroxylysine kinase (374 aa).

The Proton acceptor role is filled by aspartate 228.

Belongs to the aminoglycoside phosphotransferase family.

It localises to the cytoplasm. It carries out the reaction (5R)-5-hydroxy-L-lysine + GTP = (5R)-5-phosphooxy-L-lysine + GDP + H(+). Catalyzes the GTP-dependent phosphorylation of 5-hydroxy-L-lysine. This Xenopus laevis (African clawed frog) protein is Hydroxylysine kinase (hykk).